The sequence spans 336 residues: tRNA N6-adenosine threonylcarbamoyltransferase (336 aa).

Fe cation contacts are provided by H114 and H118. Substrate-binding positions include 136–140 (LVSGG), D169, G182, D186, and N275. D301 contacts Fe cation.

Belongs to the KAE1 / TsaD family. It depends on Fe(2+) as a cofactor.

It localises to the cytoplasm. The catalysed reaction is L-threonylcarbamoyladenylate + adenosine(37) in tRNA = N(6)-L-threonylcarbamoyladenosine(37) in tRNA + AMP + H(+). Required for the formation of a threonylcarbamoyl group on adenosine at position 37 (t(6)A37) in tRNAs that read codons beginning with adenine. Is involved in the transfer of the threonylcarbamoyl moiety of threonylcarbamoyl-AMP (TC-AMP) to the N6 group of A37, together with TsaE and TsaB. TsaD likely plays a direct catalytic role in this reaction. In Streptococcus pneumoniae (strain Hungary19A-6), this protein is tRNA N6-adenosine threonylcarbamoyltransferase.